The primary structure comprises 453 residues: Phenylalanine-4-hydroxylase (453 aa).

Alanine 2 carries the N-acetylalanine modification. Position 16 is a phosphoserine (serine 16). Residues 36-114 (SLIFSLKEEV…TVHELSRDKE (79 aa)) form the ACT domain. Residues histidine 285, histidine 290, and glutamate 330 each coordinate Fe cation.

This sequence belongs to the biopterin-dependent aromatic amino acid hydroxylase family. Homodimer and homotetramer. Requires Fe(2+) as cofactor. Post-translationally, phosphorylation at Ser-16 increases basal activity and facilitates activation by the substrate phenylalanine.

It carries out the reaction (6R)-L-erythro-5,6,7,8-tetrahydrobiopterin + L-phenylalanine + O2 = (4aS,6R)-4a-hydroxy-L-erythro-5,6,7,8-tetrahydrobiopterin + L-tyrosine. Its pathway is amino-acid degradation; L-phenylalanine degradation; acetoacetate and fumarate from L-phenylalanine: step 1/6. With respect to regulation, N-terminal region of PAH is thought to contain allosteric binding sites for phenylalanine and to constitute an 'inhibitory' domain that regulates the activity of a catalytic domain in the C-terminal portion of the molecule. Its function is as follows. Catalyzes the hydroxylation of L-phenylalanine to L-tyrosine. The chain is Phenylalanine-4-hydroxylase (Pah) from Mus musculus (Mouse).